Reading from the N-terminus, the 458-residue chain is ATP synthase subunit beta (458 aa).

148–155 (GGAGVGKT) is a binding site for ATP.

This sequence belongs to the ATPase alpha/beta chains family. In terms of assembly, F-type ATPases have 2 components, CF(1) - the catalytic core - and CF(0) - the membrane proton channel. CF(1) has five subunits: alpha(3), beta(3), gamma(1), delta(1), epsilon(1). CF(0) has three main subunits: a(1), b(2) and c(9-12). The alpha and beta chains form an alternating ring which encloses part of the gamma chain. CF(1) is attached to CF(0) by a central stalk formed by the gamma and epsilon chains, while a peripheral stalk is formed by the delta and b chains.

The protein resides in the cell inner membrane. It catalyses the reaction ATP + H2O + 4 H(+)(in) = ADP + phosphate + 5 H(+)(out). Its function is as follows. Produces ATP from ADP in the presence of a proton gradient across the membrane. The catalytic sites are hosted primarily by the beta subunits. This Alkalilimnicola ehrlichii (strain ATCC BAA-1101 / DSM 17681 / MLHE-1) protein is ATP synthase subunit beta.